We begin with the raw amino-acid sequence, 765 residues long: Probable beta-glucosidase M (765 aa).

The first 19 residues, 1-19, serve as a signal peptide directing secretion; that stretch reads MHSISALLSLLGGLALSSA. Residues N24, N71, N93, N126, and N258 are each glycosylated (N-linked (GlcNAc...) asparagine). Residue D286 is part of the active site. N-linked (GlcNAc...) asparagine glycosylation is found at N314, N321, N432, N519, N541, and N647.

This sequence belongs to the glycosyl hydrolase 3 family.

The protein resides in the secreted. The catalysed reaction is Hydrolysis of terminal, non-reducing beta-D-glucosyl residues with release of beta-D-glucose.. The protein operates within glycan metabolism; cellulose degradation. In terms of biological role, beta-glucosidases are one of a number of cellulolytic enzymes involved in the degradation of cellulosic biomass. Catalyzes the last step releasing glucose from the inhibitory cellobiose. The chain is Probable beta-glucosidase M (bglM) from Aspergillus niger (strain ATCC MYA-4892 / CBS 513.88 / FGSC A1513).